The following is a 290-amino-acid chain: Nucleotide-binding protein Aave_3603 (290 aa).

Glycine 13–serine 20 is a binding site for ATP. Residue aspartate 62–serine 65 coordinates GTP.

This sequence belongs to the RapZ-like family.

Displays ATPase and GTPase activities. The chain is Nucleotide-binding protein Aave_3603 from Paracidovorax citrulli (strain AAC00-1) (Acidovorax citrulli).